Reading from the N-terminus, the 427-residue chain is Glutamate-1-semialdehyde 2,1-aminomutase (427 aa).

K265 is modified (N6-(pyridoxal phosphate)lysine).

Belongs to the class-III pyridoxal-phosphate-dependent aminotransferase family. HemL subfamily. Homodimer. The cofactor is pyridoxal 5'-phosphate.

The protein resides in the cytoplasm. It carries out the reaction (S)-4-amino-5-oxopentanoate = 5-aminolevulinate. It participates in porphyrin-containing compound metabolism; protoporphyrin-IX biosynthesis; 5-aminolevulinate from L-glutamyl-tRNA(Glu): step 2/2. The chain is Glutamate-1-semialdehyde 2,1-aminomutase from Burkholderia pseudomallei (strain 1710b).